Here is a 91-residue protein sequence, read N- to C-terminus: Non-structural protein 3a (91 aa).

The N-terminal stretch at 1–19 (MVSFNATAILLVLVANAFS) is a signal peptide.

The protein is Non-structural protein 3a of Tylonycteris pachypus (Lesser bamboo bat).